Here is a 185-residue protein sequence, read N- to C-terminus: Virulence membrane protein PagC (185 aa).

An N-terminal signal peptide occupies residues 1–23 (MKNIILSTLVITTSVLVVNVAQA).

Belongs to the outer membrane OOP (TC 1.B.6) superfamily. Ail family.

It is found in the cell outer membrane. Its function is as follows. Essential for full virulence and survival within macrophages. In Salmonella typhimurium (strain LT2 / SGSC1412 / ATCC 700720), this protein is Virulence membrane protein PagC (pagC).